Here is a 478-residue protein sequence, read N- to C-terminus: Glutamyl-tRNA(Gln) amidotransferase subunit A (478 aa).

Residues K72 and S147 each act as charge relay system in the active site. S171 (acyl-ester intermediate) is an active-site residue.

Belongs to the amidase family. GatA subfamily. Heterotrimer of A, B and C subunits.

The enzyme catalyses L-glutamyl-tRNA(Gln) + L-glutamine + ATP + H2O = L-glutaminyl-tRNA(Gln) + L-glutamate + ADP + phosphate + H(+). Its function is as follows. Allows the formation of correctly charged Gln-tRNA(Gln) through the transamidation of misacylated Glu-tRNA(Gln) in organisms which lack glutaminyl-tRNA synthetase. The reaction takes place in the presence of glutamine and ATP through an activated gamma-phospho-Glu-tRNA(Gln). This chain is Glutamyl-tRNA(Gln) amidotransferase subunit A, found in Saccharolobus solfataricus (strain ATCC 35092 / DSM 1617 / JCM 11322 / P2) (Sulfolobus solfataricus).